A 1302-amino-acid polypeptide reads, in one-letter code: Regulator of telomere elongation helicase 1 (1302 aa).

A Helicase ATP-binding domain is found at 7 to 297 (NGVTVDFPFQ…TKTAQQGEPH (291 aa)). Position 42–49 (42–49 (SHTGTGKT)) interacts with ATP. [4Fe-4S] cluster contacts are provided by Cys-146, Cys-164, Cys-173, and Cys-208. Positions 152 to 168 (KKQESNHIQIHLCRKKV) match the Nuclear localization signal motif. The short motif at 251-254 (DEAH) is the DEAH box element. Positions 758–767 (PAPAPRATAP) are enriched in low complexity. Positions 758–819 (PAPAPRATAP…AAGDPESSLC (62 aa)) are disordered. Residues 770–780 (REGEDAVREVK) are compositionally biased toward basic and acidic residues. The Nuclear localization signal signature appears at 873–879 (PRGGRKK). 4 disordered regions span residues 981 to 1006 (RPEH…APDP), 1019 to 1058 (DPRE…GKQG), 1134 to 1153 (CTDL…PQEE), and 1160 to 1234 (VLTH…QAAG). The segment covering 1178–1187 (KTQSKISSLL) has biased composition (polar residues). The PIP-box motif lies at 1180-1187 (QSKISSLL).

The protein belongs to the helicase family. RAD3/XPD subfamily. As to quaternary structure, interacts with TERF1. Interacts (via PIP-box) with PCNA; the interaction is direct and essential for suppressing telomere fragility. Interacts with MMS19; the interaction mediates the association of RTEL1 with the cytosolic iron-sulfur protein assembly (CIA) complex.

It localises to the nucleus. It carries out the reaction ATP + H2O = ADP + phosphate + H(+). A probable ATP-dependent DNA helicase implicated in telomere-length regulation, DNA repair and the maintenance of genomic stability. Acts as an anti-recombinase to counteract toxic recombination and limit crossover during meiosis. Regulates meiotic recombination and crossover homeostasis by physically dissociating strand invasion events and thereby promotes noncrossover repair by meiotic synthesis dependent strand annealing (SDSA) as well as disassembly of D loop recombination intermediates. Also disassembles T loops and prevents telomere fragility by counteracting telomeric G4-DNA structures, which together ensure the dynamics and stability of the telomere. This chain is Regulator of telomere elongation helicase 1, found in Pongo abelii (Sumatran orangutan).